We begin with the raw amino-acid sequence, 402 residues long: Cytochrome b561 and DOMON domain-containing protein At4g17280 (402 aa).

An N-terminal signal peptide occupies residues 1–31 (MSNHMSIMKFLNQILCLSLILSISMTTLSFA). The 118-residue stretch at 54–171 (LDSFLHYTYE…GTINTVWQDG (118 aa)) folds into the DOMON domain. Residues 183-379 (TSGNNVRSVS…LEAFTWYVVI (197 aa)) enclose the Cytochrome b561 domain. Helical transmembrane passes span 218-238 (IHGI…AIIA) and 250-270 (AWFY…VAGW). Heme b is bound by residues His-219, His-255, and His-288. Residues 290-310 (AIGIALFSLATVQVFAMFLRP) traverse the membrane as a helical segment. His-324 contacts heme b. Transmembrane regions (helical) follow at residues 326-346 (TIGY…LGIL) and 359-379 (IIVV…YVVI).

Heme b is required as a cofactor.

The protein localises to the membrane. May act as a catecholamine-responsive trans-membrane electron transporter. In Arabidopsis thaliana (Mouse-ear cress), this protein is Cytochrome b561 and DOMON domain-containing protein At4g17280.